The following is a 625-amino-acid chain: Probable potassium transport system protein Kup 1 (625 aa).

The next 12 helical transmembrane spans lie at 14-34 (LSLL…TSPL), 50-70 (AAAV…ITTV), 104-124 (IVAL…ITPA), 139-159 (PALQ…LFAI), 170-190 (LFGP…LVGI), 213-233 (GATG…AEAL), 249-269 (WFAV…ALVI), 287-307 (LLLP…QSVI), 339-359 (IYVG…TIGF), 368-388 (AYGI…FIAM), 396-416 (LLAA…FFLA), and 421-441 (IAEG…LMWI).

The protein belongs to the HAK/KUP transporter (TC 2.A.72) family.

The protein localises to the cell inner membrane. It catalyses the reaction K(+)(in) + H(+)(in) = K(+)(out) + H(+)(out). Functionally, transport of potassium into the cell. Likely operates as a K(+):H(+) symporter. This is Probable potassium transport system protein Kup 1 from Bradyrhizobium sp. (strain ORS 278).